Here is a 296-residue protein sequence, read N- to C-terminus: Lipoyl synthase (296 aa).

[4Fe-4S] cluster-binding residues include C37, C42, C48, C63, C67, C70, and S276. A Radical SAM core domain is found at 49–265 (WSKKHATMMI…ERVARTKGFL (217 aa)).

The protein belongs to the radical SAM superfamily. Lipoyl synthase family. [4Fe-4S] cluster is required as a cofactor.

It localises to the cytoplasm. The catalysed reaction is [[Fe-S] cluster scaffold protein carrying a second [4Fe-4S](2+) cluster] + N(6)-octanoyl-L-lysyl-[protein] + 2 oxidized [2Fe-2S]-[ferredoxin] + 2 S-adenosyl-L-methionine + 4 H(+) = [[Fe-S] cluster scaffold protein] + N(6)-[(R)-dihydrolipoyl]-L-lysyl-[protein] + 4 Fe(3+) + 2 hydrogen sulfide + 2 5'-deoxyadenosine + 2 L-methionine + 2 reduced [2Fe-2S]-[ferredoxin]. It participates in protein modification; protein lipoylation via endogenous pathway; protein N(6)-(lipoyl)lysine from octanoyl-[acyl-carrier-protein]: step 2/2. In terms of biological role, catalyzes the radical-mediated insertion of two sulfur atoms into the C-6 and C-8 positions of the octanoyl moiety bound to the lipoyl domains of lipoate-dependent enzymes, thereby converting the octanoylated domains into lipoylated derivatives. In Rickettsia canadensis (strain McKiel), this protein is Lipoyl synthase.